A 273-amino-acid chain; its full sequence is Large ribosomal subunit protein uL2 (273 aa).

Disordered regions lie at residues 28–53 (KPFA…TTRH) and 221–273 (RGTA…RRSK). Residues 39-48 (KSGGRNNNGR) are compositionally biased toward low complexity. An N6-acetyllysine modification is found at lysine 242.

This sequence belongs to the universal ribosomal protein uL2 family. As to quaternary structure, part of the 50S ribosomal subunit. Forms a bridge to the 30S subunit in the 70S ribosome.

Its function is as follows. One of the primary rRNA binding proteins. Required for association of the 30S and 50S subunits to form the 70S ribosome, for tRNA binding and peptide bond formation. It has been suggested to have peptidyltransferase activity; this is somewhat controversial. Makes several contacts with the 16S rRNA in the 70S ribosome. This is Large ribosomal subunit protein uL2 from Escherichia coli (strain SE11).